We begin with the raw amino-acid sequence, 260 residues long: Ribosomal RNA small subunit methyltransferase G (260 aa).

S-adenosyl-L-methionine is bound by residues Gly-94, Phe-99, 117-119 (DST), 145-146 (AE), and Arg-164. The segment at 236-260 (APTPPPYPRSPGTPKRQPLGQSNRP) is disordered. Positions 237–246 (PTPPPYPRSP) are enriched in pro residues.

It belongs to the methyltransferase superfamily. RNA methyltransferase RsmG family.

Its subcellular location is the cytoplasm. Functionally, specifically methylates the N7 position of a guanine in 16S rRNA. The sequence is that of Ribosomal RNA small subunit methyltransferase G from Synechococcus sp. (strain JA-2-3B'a(2-13)) (Cyanobacteria bacterium Yellowstone B-Prime).